The following is an 84-amino-acid chain: Small ribosomal subunit protein uS17 (84 aa).

Belongs to the universal ribosomal protein uS17 family. Part of the 30S ribosomal subunit.

Its function is as follows. One of the primary rRNA binding proteins, it binds specifically to the 5'-end of 16S ribosomal RNA. This Enterobacter sp. (strain 638) protein is Small ribosomal subunit protein uS17.